A 250-amino-acid polypeptide reads, in one-letter code: MAEIAPLRVQLIAKTEFSAPPDVEWSTDADGGAALVEFAGRACYQSWSKPNPRTATNATYVRHIIDVGHFSVLEHASVSFYITGLSRSCTHELIRHRHFSYSQLSQRYVPENDAEVVAPPGIEDDPELLALFTAATDASRAAYTELLNRLEAKLADQGTSTLRRKQARQAARAVLPNATETRIVVTGNYRAWRHFIAMRASEHADVEIRRLAIECLRRLVAVAPQVFSDFEITALADGTEVATSPLATEV.

A ThyX domain is found at 7–233 (LRVQLIAKTE…PQVFSDFEIT (227 aa)). Residues Ser71, 95–97 (RHR), and Gln103 each bind FAD. DUMP is bound by residues 92 to 95 (ELIR), 103 to 107 (QLSQR), and Arg172. Residues 95–105 (RHRHFSYSQLS) carry the ThyX motif motif. Residues 188-190 (NYR) and His194 contribute to the FAD site. A dUMP-binding site is contributed by Arg199. Catalysis depends on Arg199, which acts as the Involved in ionization of N3 of dUMP, leading to its activation.

The protein belongs to the thymidylate synthase ThyX family. As to quaternary structure, homotetramer. FAD is required as a cofactor.

The enzyme catalyses dUMP + (6R)-5,10-methylene-5,6,7,8-tetrahydrofolate + NADPH + H(+) = dTMP + (6S)-5,6,7,8-tetrahydrofolate + NADP(+). The protein operates within pyrimidine metabolism; dTTP biosynthesis. Its function is as follows. Catalyzes the reductive methylation of 2'-deoxyuridine-5'-monophosphate (dUMP) to 2'-deoxythymidine-5'-monophosphate (dTMP) while utilizing 5,10-methylenetetrahydrofolate (mTHF) as the methyl donor, and NADPH and FADH(2) as the reductant. This Mycolicibacterium gilvum (strain PYR-GCK) (Mycobacterium gilvum (strain PYR-GCK)) protein is Flavin-dependent thymidylate synthase.